The primary structure comprises 393 residues: Cytotoxic and regulatory T-cell molecule (393 aa).

An N-terminal signal peptide occupies residues 1-16; that stretch reads MWWGALSLLFWVPVQA. An Ig-like V-type domain is found at 17–111; that stretch reads AFLKMETVTV…SVKTKQVRVT (95 aa). The Extracellular portion of the chain corresponds to 17-289; that stretch reads AFLKMETVTV…HTGLARRKSG (273 aa). Intrachain disulfides connect C36/C96 and C139/C194. 2 N-linked (GlcNAc...) asparagine glycosylation sites follow: N85 and N176. The 90-residue stretch at 119–208 folds into the Ig-like C2-type domain; the sequence is PTVEALVLRR…EGLHGRKLVA (90 aa). Positions 218-228 are enriched in acidic residues; sequence DQETSDQETSD. Residues 218–280 are disordered; sequence DQETSDQETS…GLSTEASAQH (63 aa). Positions 229 to 246 are enriched in low complexity; it reads APEQSSLSSQALQQPTST. Over residues 247 to 256 the composition is skewed to polar residues; it reads VSMMENSSIP. Residues 257-267 show a composition bias toward basic and acidic residues; sequence ETDKEEKEHAT. Residues 270-280 are compositionally biased toward polar residues; the sequence is PGLSTEASAQH. Residues 290–310 form a helical membrane-spanning segment; the sequence is ILLLTLVSFLIFILFIIVQLF. Topologically, residues 311 to 393 are cytoplasmic; the sequence is IMKLRKAHVV…KHSRVPESIV (83 aa). The segment at 333–356 is disordered; it reads ESYRSRSNNEETSSQENSSQAPQS. The span at 342 to 352 shows a compositional bias: low complexity; the sequence is EETSSQENSSQ. The PDZ-binding signature appears at 390–393; sequence ESIV.

It belongs to the nectin family. Monomer. May form homodimer (via Ig-like V-type domain). Interacts (via Ig-like V-type domain) with CADM1 (via Ig-like V-type domain); the interaction competes with CRTAM homodimerization and CADM1 homodimerization. Interacts (via PDZ-binding motif) with SCRIB (via PDZ domain 3); the interaction promotes CRTAM and SCRIB polarization in a subset of CD4+ T-cells. In terms of tissue distribution, in the immune system, expression is restricted to activated class-I MHC-restricted cells, including NKT, NK and CD8+ T-cells (at protein level). Transiently expressed in activated CD8+ T-cells and a subset of activated CD4+ T-cells (at protein level). Expressed in activated intestinal T-cells, specifically intraepithelial CD4+ CD8+ T-cells, intraepithelial CD4+ T-cells and, CD8+ T-cells in the intestine epithelium, lamina propria, Peyer's Patches and mesenteric lymph nodes. Also expressed in spleen, brain and testis.

The protein localises to the cell membrane. Functionally, mediates heterophilic cell-cell adhesion which regulates the activation, differentiation and tissue retention of various T-cell subsets. Interaction with CADM1 promotes natural killer (NK) cell cytotoxicity and IFNG/interferon-gamma secretion by CD8+ T-cells in vitro as well as NK cell-mediated rejection of tumors expressing CADM1 in vivo. Regulates CD8+ T-cell proliferation in response to T-cell receptor (TCR) activation. Appears to be dispensable for CD8+ T-cell-mediated cytotoxicity. Interaction with SCRIB promotes the late phase of cellular polarization of a subset of CD4+ T-cells, which in turn regulates TCR-mediated proliferation and IFNG, IL17 and IL22 production. By interacting with CADM1 on CD8+ dendritic cells, regulates the retention of activated CD8+ T-cells within the draining lymph node. Required for the intestinal retention of intraepithelial CD4+ CD8+ T-cells and, to a lesser extent, intraepithelial and lamina propria CD8+ T-cells and CD4+ T-cells. Interaction with CADM1 promotes the adhesion to gut-associated CD103+ dendritic cells, which may facilitate the expression of gut-homing and adhesion molecules on T-cells and the conversion of CD4+ T-cells into CD4+ CD8+ T-cells. The sequence is that of Cytotoxic and regulatory T-cell molecule from Mus musculus (Mouse).